Reading from the N-terminus, the 336-residue chain is Fructose-1,6-bisphosphatase class 1 (336 aa).

Residues glutamate 90, aspartate 112, leucine 114, and aspartate 115 each coordinate Mg(2+). Substrate-binding positions include 115–118, asparagine 211, and lysine 277; that span reads DGSS. Glutamate 283 provides a ligand contact to Mg(2+).

It belongs to the FBPase class 1 family. In terms of assembly, homotetramer. It depends on Mg(2+) as a cofactor.

It localises to the cytoplasm. The enzyme catalyses beta-D-fructose 1,6-bisphosphate + H2O = beta-D-fructose 6-phosphate + phosphate. It participates in carbohydrate biosynthesis; gluconeogenesis. This is Fructose-1,6-bisphosphatase class 1 from Stutzerimonas stutzeri (strain A1501) (Pseudomonas stutzeri).